The chain runs to 405 residues: Lariat debranching enzyme (405 aa).

The a divalent metal cation site is built by Cys11, His13, Asp40, and Asn85. The interval 125-159 is lariat recognition loop; sequence SGIWKEWDFNKQRPDWNDLENNNWKANIRNLYHVR. Residues His179, His231, and His233 each contribute to the a divalent metal cation site. The disordered stretch occupies residues 242 to 277; sequence HNKRSHEPPNKSTSKTKKNNNEIDLDLSSDEDERSG. Acidic residues predominate over residues 264 to 274; that stretch reads IDLDLSSDEDE. Ser269 is subject to Phosphoserine.

Belongs to the lariat debranching enzyme family. Requires Fe(2+) as cofactor. Zn(2+) is required as a cofactor. The cofactor is Mn(2+).

The protein localises to the nucleus. It is found in the cytoplasm. Its activity is regulated as follows. Active in presence of diverse metals including Fe(2+), Zn(2+) and Mn(2+). Binds two metal cations in two adjacent alpha and beta metal-binding pockets. The activity is the highest with Fe(2+) bound to the 2 metal-binding sites. Activity is low with Zn(2+) and Mn(2+). Cleaves the 2'-5' phosphodiester linkage at the branch point of lariat intron pre-mRNAs after splicing and converts them into linear molecules that are subsequently degraded, thereby facilitating ribonucleotide turnover. It also participates in Ty1 retrovirus-like transposition via an RNA lariat intermediate in cDNA synthesis. This Saccharomyces cerevisiae (strain ATCC 204508 / S288c) (Baker's yeast) protein is Lariat debranching enzyme (DBR1).